The sequence spans 71 residues: MGRVKPKYIKSLARRLLETYPDKFTDSFEENKKAVAQLADIPSKTVRNKVAGYITRLVKRLKTQEKTESAA.

It belongs to the eukaryotic ribosomal protein eS17 family.

In Pyrobaculum islandicum (strain DSM 4184 / JCM 9189 / GEO3), this protein is Small ribosomal subunit protein eS17.